We begin with the raw amino-acid sequence, 446 residues long: Chromosomal replication initiator protein DnaA (446 aa).

Residues 1–81 (MENISDLWNS…AKLAIRFIIP (81 aa)) are domain I, interacts with DnaA modulators. The segment at 81–109 (PQSQAEEDIDLPSVKQKHAHDESNHLPQS) is domain II. The tract at residues 110 to 326 (MLNPKYTFDT…GALIRVVAYS (217 aa)) is domain III, AAA+ region. ATP-binding residues include G154, G156, K157, and T158. Positions 327–446 (SLINKDMNAD…HVEEVKDILK (120 aa)) are domain IV, binds dsDNA.

This sequence belongs to the DnaA family. As to quaternary structure, oligomerizes as a right-handed, spiral filament on DNA at oriC.

The protein localises to the cytoplasm. Its function is as follows. Plays an essential role in the initiation and regulation of chromosomal replication. ATP-DnaA binds to the origin of replication (oriC) to initiate formation of the DNA replication initiation complex once per cell cycle. Binds the DnaA box (a 9 base pair repeat at the origin) and separates the double-stranded (ds)DNA. Forms a right-handed helical filament on oriC DNA; dsDNA binds to the exterior of the filament while single-stranded (ss)DNA is stabiized in the filament's interior. The ATP-DnaA-oriC complex binds and stabilizes one strand of the AT-rich DNA unwinding element (DUE), permitting loading of DNA polymerase. After initiation quickly degrades to an ADP-DnaA complex that is not apt for DNA replication. Binds acidic phospholipids. The sequence is that of Chromosomal replication initiator protein DnaA from Bacillus mycoides (strain KBAB4) (Bacillus weihenstephanensis).